Consider the following 1416-residue polypeptide: DNA-directed RNA polymerase subunit beta (1416 aa).

Residues 1388-1416 are disordered; sequence AKAAREQAEGELGGPLGTPRGAAAEKNTA.

Belongs to the RNA polymerase beta chain family. In terms of assembly, the RNAP catalytic core consists of 2 alpha, 1 beta, 1 beta' and 1 omega subunit. When a sigma factor is associated with the core the holoenzyme is formed, which can initiate transcription.

The enzyme catalyses RNA(n) + a ribonucleoside 5'-triphosphate = RNA(n+1) + diphosphate. Its function is as follows. DNA-dependent RNA polymerase catalyzes the transcription of DNA into RNA using the four ribonucleoside triphosphates as substrates. The polypeptide is DNA-directed RNA polymerase subunit beta (Anaeromyxobacter sp. (strain Fw109-5)).